Consider the following 889-residue polypeptide: A disintegrin and metalloproteinase with thrombospondin motifs 8 (889 aa).

An N-terminal signal peptide occupies residues 1-26 (MLPAPAAPRWPPLLLLLLLLLPLARG). Residues 27–213 (APARPAAGGQ…PLGATSRTKR (187 aa)) constitute a propeptide that is removed on maturation. The segment at 138-210 (QGAGGSLAQP…PPPPLGATSR (73 aa)) is disordered. Positions 173–183 (EGQRQERGDHQ) are enriched in basic and acidic residues. Residues 184–197 (EDSEEESQEEEAEG) are compositionally biased toward acidic residues. Residues 219 to 429 (RFVETLLVAD…GHGDCLLDAP (211 aa)) form the Peptidase M12B domain. 11 disulfides stabilise this stretch: Cys294–Cys347, Cys323–Cys329, Cys341–Cys424, Cys379–Cys408, Cys452–Cys477, Cys463–Cys486, Cys472–Cys507, Cys501–Cys512, Cys538–Cys575, Cys542–Cys580, and Cys553–Cys565. Asn344 carries an N-linked (GlcNAc...) asparagine glycan. His363 lines the Zn(2+) pocket. Residue Glu364 is part of the active site. Residues His367 and His373 each contribute to the Zn(2+) site. Residues Asn400, Asn465, and Asn490 are each glycosylated (N-linked (GlcNAc...) asparagine). The Disintegrin domain maps to 438-525 (GLPGRMALYQ…EEVERPKPVA (88 aa)). The 56-residue stretch at 526-581 (DGGWAPWGPWGECSRTCGGGVQFSHRECKDPEPQNGGRYCLGRRAKYQSCHTEECP) folds into the TSP type-1 1 domain. The N-linked (GlcNAc...) asparagine glycan is linked to Asn599. Positions 690–831 (RKVSGSLTPT…RATTNIIQPL (142 aa)) are spacer. The TSP type-1 2 domain maps to 833–888 (HAQWVLGDWSECSSTCGAGWQRRTVECRDPSGQASATCNKALKPEDAKPCESQLCP).

Zn(2+) is required as a cofactor. Post-translationally, the precursor is cleaved by a furin endopeptidase. Glycosylated. Can be O-fucosylated by POFUT2 on a serine or a threonine residue found within the consensus sequence C1-X(2)-(S/T)-C2-G of the TSP type-1 repeat domains where C1 and C2 are the first and second cysteine residue of the repeat, respectively. Fucosylated repeats can then be further glycosylated by the addition of a beta-1,3-glucose residue by the glucosyltransferase, B3GALTL. Fucosylation mediates the efficient secretion of ADAMTS family members. Can also be C-glycosylated with one or two mannose molecules on tryptophan residues within the consensus sequence W-X-X-W of the TPRs, and N-glycosylated. These other glycosylations can also facilitate secretion. Highly expressed in adult and fetal lung, lower expression in brain, placenta, heart, stomach and fetal brain and kidney.

The protein localises to the secreted. It localises to the extracellular space. Its subcellular location is the extracellular matrix. In terms of biological role, has anti-angiogenic properties. This is A disintegrin and metalloproteinase with thrombospondin motifs 8 (ADAMTS8) from Homo sapiens (Human).